The sequence spans 125 residues: Small ribosomal subunit protein uS12 (125 aa).

Aspartate 89 is modified (3-methylthioaspartic acid).

The protein belongs to the universal ribosomal protein uS12 family. As to quaternary structure, part of the 30S ribosomal subunit. Contacts proteins S8 and S17. May interact with IF1 in the 30S initiation complex.

In terms of biological role, with S4 and S5 plays an important role in translational accuracy. Functionally, interacts with and stabilizes bases of the 16S rRNA that are involved in tRNA selection in the A site and with the mRNA backbone. Located at the interface of the 30S and 50S subunits, it traverses the body of the 30S subunit contacting proteins on the other side and probably holding the rRNA structure together. The combined cluster of proteins S8, S12 and S17 appears to hold together the shoulder and platform of the 30S subunit. This Cupriavidus metallidurans (strain ATCC 43123 / DSM 2839 / NBRC 102507 / CH34) (Ralstonia metallidurans) protein is Small ribosomal subunit protein uS12.